A 376-amino-acid polypeptide reads, in one-letter code: Protein-glutamate methylesterase/protein-glutamine glutaminase (376 aa).

A Response regulatory domain is found at 5 to 122 (KVLIVDDSAL…QHTFEDYTDE (118 aa)). Position 56 is a 4-aspartylphosphate (D56). Residues 185–376 (SKPSHKVIAL…PEKILALIKK (192 aa)) form the CheB-type methylesterase domain. Catalysis depends on residues S197, H223, and D319.

This sequence belongs to the CheB family. In terms of processing, phosphorylated by CheA. Phosphorylation of the N-terminal regulatory domain activates the methylesterase activity.

The protein resides in the cytoplasm. It catalyses the reaction [protein]-L-glutamate 5-O-methyl ester + H2O = L-glutamyl-[protein] + methanol + H(+). The catalysed reaction is L-glutaminyl-[protein] + H2O = L-glutamyl-[protein] + NH4(+). Its function is as follows. Involved in chemotaxis. Part of a chemotaxis signal transduction system that modulates chemotaxis in response to various stimuli. Catalyzes the demethylation of specific methylglutamate residues introduced into the chemoreceptors (methyl-accepting chemotaxis proteins or MCP) by CheR. Also mediates the irreversible deamidation of specific glutamine residues to glutamic acid. This is Protein-glutamate methylesterase/protein-glutamine glutaminase from Hydrogenovibrio crunogenus (strain DSM 25203 / XCL-2) (Thiomicrospira crunogena).